Reading from the N-terminus, the 304-residue chain is N-acetylmuramic acid 6-phosphate etherase (304 aa).

Position 2 is a phosphoserine (Ser-2). Residues 59-222 (AYESFQNGGR…STAVMVKIGK (164 aa)) form the SIS domain. The active-site Proton donor is Glu-87. Glu-118 is an active-site residue.

It belongs to the GCKR-like family. MurNAc-6-P etherase subfamily. As to quaternary structure, homodimer.

It carries out the reaction N-acetyl-D-muramate 6-phosphate + H2O = N-acetyl-D-glucosamine 6-phosphate + (R)-lactate. It participates in amino-sugar metabolism; N-acetylmuramate degradation. Specifically catalyzes the cleavage of the D-lactyl ether substituent of MurNAc 6-phosphate, producing GlcNAc 6-phosphate and D-lactate. In Bacillus subtilis (strain 168), this protein is N-acetylmuramic acid 6-phosphate etherase.